A 266-amino-acid chain; its full sequence is Undecaprenyl-diphosphatase 1 (266 aa).

The next 8 helical transmembrane spans lie at methionine 1–isoleucine 21, glutamine 39–phenylalanine 59, serine 83–leucine 103, serine 113–alanine 133, isoleucine 141–isoleucine 161, phenylalanine 189–leucine 209, threonine 218–leucine 238, and methionine 244–leucine 264.

This sequence belongs to the UppP family.

The protein resides in the cell inner membrane. It carries out the reaction di-trans,octa-cis-undecaprenyl diphosphate + H2O = di-trans,octa-cis-undecaprenyl phosphate + phosphate + H(+). In terms of biological role, catalyzes the dephosphorylation of undecaprenyl diphosphate (UPP). Confers resistance to bacitracin. The chain is Undecaprenyl-diphosphatase 1 from Pseudoalteromonas translucida (strain TAC 125).